Consider the following 413-residue polypeptide: Multidrug resistance protein MdtA (413 aa).

An N-terminal signal peptide occupies residues 1–20; the sequence is MKGSNTFRWAIAIGVVVAAA. Disordered regions lie at residues 31–57 and 391–413; these read SPTA…RDGP and EPQT…GARA. Residues 32-49 are compositionally biased toward low complexity; sequence PTAAPGVAAQAQHTAAAG. The segment covering 397–413 has biased composition (basic and acidic residues); it reads ADEKSPSRHEGQKGARA.

This sequence belongs to the membrane fusion protein (MFP) (TC 8.A.1) family. Part of a tripartite efflux system composed of MdtA, MdtB and MdtC.

It is found in the cell inner membrane. This Salmonella typhi protein is Multidrug resistance protein MdtA.